The sequence spans 243 residues: Cyclin-dependent kinase 20 (243 aa).

A Protein kinase domain is found at 4 to 243; sequence YCILGRIGEG…IHLSCRFLSV (240 aa). Residues 10 to 18 and lysine 33 each bind ATP; that span reads IGEGAHGIV. Catalysis depends on aspartate 127, which acts as the Proton acceptor.

The protein belongs to the protein kinase superfamily. CMGC Ser/Thr protein kinase family. CDC2/CDKX subfamily. Monomer. Interacts with TBC1D32 and MAK.

The protein localises to the nucleus. Its subcellular location is the cytoplasm. It is found in the cell projection. It localises to the cilium. It carries out the reaction L-seryl-[protein] + ATP = O-phospho-L-seryl-[protein] + ADP + H(+). The enzyme catalyses L-threonyl-[protein] + ATP = O-phospho-L-threonyl-[protein] + ADP + H(+). Its function is as follows. Required for high-level Shh responses in the developing neural tube. Together with TBC1D32, controls the structure of the primary cilium by coordinating assembly of the ciliary membrane and axoneme, allowing GLI2 to be properly activated in response to SHH signaling. Involved in cell growth. Activates CDK2, a kinase involved in the control of the cell cycle, by phosphorylating residue 'Thr-160'. This chain is Cyclin-dependent kinase 20 (CDK20), found in Macaca mulatta (Rhesus macaque).